The chain runs to 473 residues: Lipid A galacturonosyltransferase RgtD (473 aa).

The next 10 membrane-spanning stretches (helical) occupy residues G6–T26, A68–M88, F94–A114, V118–F138, F160–I180, V190–Q210, F238–V258, K271–A291, A295–L315, and I327–L347.

The protein resides in the cell membrane. It participates in bacterial outer membrane biogenesis; LPS lipid A biosynthesis. Functionally, involved in the modification of the lipopolysaccharide (LPS) lipid A moiety. Catalyzes the transfer of a galacturonic acid (GalA) residue to the 4'-position of 4'-dephosphorylated lipid A, using dodecaprenyl phosphate-GalA as the donor substrate. Acts before the other GalA transferases RgtA, RgtB and RgtC. This is Lipid A galacturonosyltransferase RgtD from Rhizobium johnstonii (strain DSM 114642 / LMG 32736 / 3841) (Rhizobium leguminosarum bv. viciae).